We begin with the raw amino-acid sequence, 135 residues long: Ribosome-binding factor A (135 aa).

Belongs to the RbfA family. As to quaternary structure, monomer. Binds 30S ribosomal subunits, but not 50S ribosomal subunits or 70S ribosomes.

It is found in the cytoplasm. One of several proteins that assist in the late maturation steps of the functional core of the 30S ribosomal subunit. Associates with free 30S ribosomal subunits (but not with 30S subunits that are part of 70S ribosomes or polysomes). Required for efficient processing of 16S rRNA. May interact with the 5'-terminal helix region of 16S rRNA. In Bartonella tribocorum (strain CIP 105476 / IBS 506), this protein is Ribosome-binding factor A.